The chain runs to 142 residues: uncharacterized protein (142 aa).

The Peptidase C39 domain occupies 18–137 (QSSGYSCGPA…KIFTGNVLVV (120 aa)).

This is an uncharacterized protein from Methanothermobacter marburgensis (strain ATCC BAA-927 / DSM 2133 / JCM 14651 / NBRC 100331 / OCM 82 / Marburg) (Methanobacterium thermoautotrophicum).